The following is a 38-amino-acid chain: MKVRASVKKICRNCKIIRRKNIIRVICSNDPKHKQRQG.

It belongs to the bacterial ribosomal protein bL36 family.

This is Large ribosomal subunit protein bL36 from Buchnera aphidicola subsp. Cinara cedri (strain Cc).